A 118-amino-acid polypeptide reads, in one-letter code: Small ribosomal subunit protein uS13 (118 aa).

A disordered region spans residues Gly94 to Lys118.

It belongs to the universal ribosomal protein uS13 family. In terms of assembly, part of the 30S ribosomal subunit. Forms a loose heterodimer with protein S19. Forms two bridges to the 50S subunit in the 70S ribosome.

In terms of biological role, located at the top of the head of the 30S subunit, it contacts several helices of the 16S rRNA. In the 70S ribosome it contacts the 23S rRNA (bridge B1a) and protein L5 of the 50S subunit (bridge B1b), connecting the 2 subunits; these bridges are implicated in subunit movement. Contacts the tRNAs in the A and P-sites. The sequence is that of Small ribosomal subunit protein uS13 from Mannheimia succiniciproducens (strain KCTC 0769BP / MBEL55E).